The chain runs to 363 residues: Isopentenyl-diphosphate delta-isomerase (363 aa).

6 to 7 provides a ligand contact to substrate; that stretch reads RK. FMN is bound by residues 64–66, Ser-94, and Asn-123; that span reads AMT. Residue Gln-153 coordinates substrate. Mg(2+) is bound at residue Glu-154. FMN contacts are provided by residues Lys-185, Ser-210, Thr-215, 259-261, and 280-281; these read GVR and SA.

Belongs to the IPP isomerase type 2 family. Homooctamer. Dimer of tetramers. Requires Mg(2+) as cofactor. FMN is required as a cofactor. It depends on NADPH as a cofactor.

The protein resides in the cytoplasm. The catalysed reaction is isopentenyl diphosphate = dimethylallyl diphosphate. In terms of biological role, involved in the biosynthesis of isoprenoids. Catalyzes the 1,3-allylic rearrangement of the homoallylic substrate isopentenyl (IPP) to its allylic isomer, dimethylallyl diphosphate (DMAPP). The polypeptide is Isopentenyl-diphosphate delta-isomerase (Streptomyces sp. (strain CL190)).